An 89-amino-acid polypeptide reads, in one-letter code: Small ribosomal subunit protein uS15 (89 aa).

A compositionally biased stretch (basic and acidic residues) spans 1 to 10 (MSLDTTEKQE). The segment at 1-23 (MSLDTTEKQELINAHQTHATDTG) is disordered. The span at 14–23 (AHQTHATDTG) shows a compositional bias: polar residues.

Belongs to the universal ribosomal protein uS15 family. Part of the 30S ribosomal subunit. Forms a bridge to the 50S subunit in the 70S ribosome, contacting the 23S rRNA.

In terms of biological role, one of the primary rRNA binding proteins, it binds directly to 16S rRNA where it helps nucleate assembly of the platform of the 30S subunit by binding and bridging several RNA helices of the 16S rRNA. Its function is as follows. Forms an intersubunit bridge (bridge B4) with the 23S rRNA of the 50S subunit in the ribosome. The sequence is that of Small ribosomal subunit protein uS15 from Synechococcus sp. (strain WH7803).